A 135-amino-acid chain; its full sequence is Small ribosomal subunit protein uS17 (135 aa).

The disordered stretch occupies residues 1 to 59 (MAEAKTGAKAAPRVAKAAKAAPKKAAPNDAEAIGAANAANVKGPKHTPRTPKPRGRRKT). The span at 8-42 (AKAAPRVAKAAKAAPKKAAPNDAEAIGAANAANVK) shows a compositional bias: low complexity. Residues 43–59 (GPKHTPRTPKPRGRRKT) are compositionally biased toward basic residues.

It belongs to the universal ribosomal protein uS17 family. Part of the 30S ribosomal subunit.

One of the primary rRNA binding proteins, it binds specifically to the 5'-end of 16S ribosomal RNA. The chain is Small ribosomal subunit protein uS17 from Mycobacterium bovis (strain ATCC BAA-935 / AF2122/97).